Reading from the N-terminus, the 748-residue chain is Catalase-peroxidase 2 (748 aa).

A compositionally biased stretch (polar residues) spans 1–24 (MSSDTSDSRPPNPDTKTASTSESE). The tract at residues 1 to 43 (MSSDTSDSRPPNPDTKTASTSESENPAIPSPKPKSGAPLRNQD) is disordered. Residues 113–238 (WHSAGTYRIH…YGATTMGLIY (126 aa)) constitute a cross-link (tryptophyl-tyrosyl-methioninium (Trp-Tyr) (with M-264)). The active-site Proton acceptor is H114. Positions 238–264 (YVNPEGPEGQPDPLAAAHDIRETFGRM) form a cross-link, tryptophyl-tyrosyl-methioninium (Tyr-Met) (with W-113). A heme b-binding site is contributed by H279.

It belongs to the peroxidase family. Peroxidase/catalase subfamily. As to quaternary structure, homotetramer. It depends on heme b as a cofactor. Formation of the three residue Trp-Tyr-Met cross-link is important for the catalase, but not the peroxidase activity of the enzyme.

It catalyses the reaction H2O2 + AH2 = A + 2 H2O. The catalysed reaction is 2 H2O2 = O2 + 2 H2O. Its function is as follows. Bifunctional enzyme with both catalase and broad-spectrum peroxidase activity. May play a role in the intracellular survival of mycobacteria. In Mycolicibacterium smegmatis (strain ATCC 700084 / mc(2)155) (Mycobacterium smegmatis), this protein is Catalase-peroxidase 2.